A 380-amino-acid polypeptide reads, in one-letter code: Cytochrome b (380 aa).

Transmembrane regions (helical) follow at residues 33 to 53 (FGSLLGLCLITQVLTGLFLAM), 77 to 98 (WLLRNIHANGASFFFICIYLHI), 113 to 133 (WNIGVLLLLLVMMTAFVGYVL), and 178 to 198 (FFTFHFLLPFIIMGATMLHLL). Positions 83 and 97 each coordinate heme b. The heme b site is built by H182 and H196. H201 lines the a ubiquinone pocket. 4 consecutive transmembrane segments (helical) span residues 226–246 (YKDLLGFTILLAILSALALLN), 288–308 (LGGVLALLLSILILVVVPVLH), 320–340 (PSQTLFWILVANMLVLTWIGG), and 347–367 (FIIIGQIASVLYFMLFLILIP).

It belongs to the cytochrome b family. The cytochrome bc1 complex contains 3 respiratory subunits (MT-CYB, CYC1 and UQCRFS1), 2 core proteins (UQCRC1 and UQCRC2) and probably 6 low-molecular weight proteins. Requires heme b as cofactor.

The protein localises to the mitochondrion inner membrane. Functionally, component of the ubiquinol-cytochrome c reductase complex (complex III or cytochrome b-c1 complex) that is part of the mitochondrial respiratory chain. The b-c1 complex mediates electron transfer from ubiquinol to cytochrome c. Contributes to the generation of a proton gradient across the mitochondrial membrane that is then used for ATP synthesis. The sequence is that of Cytochrome b (mt-cyb) from Atractosteus spatula (Alligator gar).